The following is a 1069-amino-acid chain: Receptor-type guanylate cyclase gcy-29 (1069 aa).

The N-terminal stretch at 1–23 (MLPNFWNFQFIFVIFCWIPIVVS) is a signal peptide. The Extracellular portion of the chain corresponds to 24 to 458 (DEKIVLKIGS…FREENCDYTQ (435 aa)). Residues Asn-161, Asn-240, and Asn-407 are each glycosylated (N-linked (GlcNAc...) asparagine). Residues 459 to 479 (TIVIATAVVCIILTVFLGIWL) traverse the membrane as a helical segment. Topologically, residues 480 to 1069 (RRACETSALD…FKKKNNTFDF (590 aa)) are cytoplasmic. In terms of domain architecture, Protein kinase spans 497–806 (RDDVQILDEE…RVRLATEIAL (310 aa)). Residues 503–511 (LDEEQVKSV) and Lys-527 contribute to the ATP site. A Guanylate cyclase domain is found at 876–1006 (TVMFSDIVGF…ETVNIAAVME (131 aa)). Positions 881, 882, and 925 each coordinate Mg(2+).

The protein belongs to the adenylyl cyclase class-4/guanylyl cyclase family. Expressed bilaterally in ASE and AFD sensory neurons.

The protein resides in the cell membrane. The catalysed reaction is GTP = 3',5'-cyclic GMP + diphosphate. Guanylate cyclase involved in the production of the second messenger cGMP. The polypeptide is Receptor-type guanylate cyclase gcy-29 (Caenorhabditis elegans).